The chain runs to 300 residues: Coatomer subunit epsilon (300 aa).

Belongs to the COPE family. As to quaternary structure, oligomeric complex that consists of at least the alpha, beta, beta', gamma, delta, epsilon and zeta subunits.

The protein resides in the cytoplasm. It is found in the golgi apparatus membrane. The protein localises to the cytoplasmic vesicle. Its subcellular location is the COPI-coated vesicle membrane. In terms of biological role, the coatomer is a cytosolic protein complex that binds to dilysine motifs and reversibly associates with Golgi non-clathrin-coated vesicles, which further mediate biosynthetic protein transport from the ER, via the Golgi up to the trans Golgi network. The coatomer complex is required for budding from Golgi membranes, and is essential for the retrograde Golgi-to-ER transport of dilysine-tagged proteins. The protein is Coatomer subunit epsilon (cope) of Dictyostelium discoideum (Social amoeba).